The sequence spans 70 residues: Aurein-3.1 (70 aa).

The signal sequence occupies residues 1–22; it reads MAFLKKSLFLVLFLGLVSLSIC. A propeptide spanning residues 23–49 is cleaved from the precursor; that stretch reads EKEKRQNEEDEDENEAANHEEGSEEKR. Positions 27-48 are disordered; sequence RQNEEDEDENEAANHEEGSEEK. Residues 38-48 show a composition bias toward basic and acidic residues; that stretch reads AANHEEGSEEK. Isoleucine 66 is subject to Isoleucine amide.

As to expression, expressed by the skin dorsal glands.

The protein resides in the secreted. The protein localises to the target cell membrane. Its function is as follows. Amphipathic alpha-helical antimicrobial peptide with weak to potent activity against Gram-positive bacteria, and no activity against Gram-negative bacteria. Probably acts by disturbing membrane functions with its amphipathic structure. Shows anticancer activity. The protein is Aurein-3.1 of Ranoidea aurea (Green and golden bell frog).